We begin with the raw amino-acid sequence, 131 residues long: Small ribosomal subunit protein uS8 (131 aa).

Belongs to the universal ribosomal protein uS8 family. As to quaternary structure, part of the 30S ribosomal subunit. Contacts proteins S5 and S12.

Its function is as follows. One of the primary rRNA binding proteins, it binds directly to 16S rRNA central domain where it helps coordinate assembly of the platform of the 30S subunit. The sequence is that of Small ribosomal subunit protein uS8 from Pelodictyon phaeoclathratiforme (strain DSM 5477 / BU-1).